We begin with the raw amino-acid sequence, 690 residues long: MGTVRSRRLWWPLPLLLLLLLGPAGARAQEDDDGDYEELVLALRSEEDGLAEALQHGATATFHRCAKDPWRLPGTYVVVLKEETQRLQPERTARRLQAQAARRGYLIKLLHVFHDLLPGFLVKMSRDLLELALRLPHVDYIEEDSYVFAQSIPWNLERITPARYRADEYQPPNGGSLVEVYLLDTSIQSGHREIEGRVMVTDFESVPEEDGTRFHRQASKCDSHGTHLAGVVSGRDAGVAKGASLRSLRVLNCQGKGTVSSTLIGLEFIRKNQLVQPVGPLVVLLPLAGGYSRVLNAACQRLARAGVVLVAAAGNFRDDACLYSPASAPEVITVGATNAQDQPVTLGTLGTNFGRCVDLFAPGEDIIGASSDCSTCFVSQSGTSQAAAHVAGIAAMMLSAEPELTLAELRQRLIHFSAKDVINEAWFPEDQRVLTPNLVAALPPSTHGAGWQLFCRTVWSAHSGPTRMATAMARCAPDEELLSCSSFSRSGKRRGERIEAQGGKLVCRAHNAFGGEGVYAIARCCLLPQANCSVHTAPPAGTGMGTRVHCHQQGHVLTGCSSHWEVEDLGTHKPPVLRPRVQPDQCMGHSGASTHASCCHAPGLECKVKEHGLPAPQEQVTVACEEGWTLTGCSALPGTSHVLGAYAVDDTCVVRSRDVGTTGNISEEAVTAVAICCRSWHLAQASQELQ.

Positions 1–28 (MGTVRSRRLWWPLPLLLLLLLGPAGARA) are cleaved as a signal peptide. A propeptide spanning residues 29-150 (QEDDDGDYEE…IEEDSYVFAQ (122 aa)) is cleaved from the precursor. At tyrosine 36 the chain carries Sulfotyrosine. A Phosphoserine modification is found at serine 45. One can recognise an Inhibitor I9 domain in the interval 75-147 (TYVVVLKEET…VDYIEEDSYV (73 aa)). Residues 153-459 (PWNLERITPA…GWQLFCRTVW (307 aa)) enclose the Peptidase S8 domain. Residues aspartate 184 and histidine 224 each act as charge relay system in the active site. 2 disulfides stabilise this stretch: cysteine 221-cysteine 253 and cysteine 321-cysteine 356. The active-site Charge relay system is serine 384. The tract at residues 448–690 (GAGWQLFCRT…HLAQASQELQ (243 aa)) is C-terminal domain. Disulfide bonds link cysteine 455/cysteine 525, cysteine 475/cysteine 524, and cysteine 484/cysteine 507. The N-linked (GlcNAc...) asparagine glycan is linked to asparagine 531. Intrachain disulfides connect cysteine 532/cysteine 599, cysteine 550/cysteine 598, cysteine 560/cysteine 586, cysteine 606/cysteine 677, cysteine 624/cysteine 676, and cysteine 633/cysteine 652. A Phosphoserine modification is found at serine 686.

This sequence belongs to the peptidase S8 family. In terms of assembly, monomer. Can self-associate to form dimers and higher multimers which may have increased LDLR degrading activity. The precursor protein but not the mature protein may form multimers. Interacts with APOB, VLDLR, LRP8/APOER2 and BACE1. The full-length immature form (pro-PCSK9) interacts with SCNN1A, SCNN1B and SCNN1G. The pro-PCSK9 form (via C-terminal domain) interacts with LDLR. Interacts (via the C-terminal domain) with ANXA2 (via repeat Annexin 1); the interaction inhibits the degradation of LDLR. Requires Ca(2+) as cofactor. Post-translationally, cleavage by furin and PCSK5 generates a truncated inactive protein that is unable to induce LDLR degradation. In terms of processing, undergoes autocatalytic cleavage in the endoplasmic reticulum to release the propeptide from the N-terminus and the cleavage of the propeptide is strictly required for its maturation and activation. The cleaved propeptide however remains associated with the catalytic domain through non-covalent interactions, preventing potential substrates from accessing its active site. As a result, it is secreted from cells as a propeptide-containing, enzymatically inactive protein. Phosphorylation protects the propeptide against proteolysis.

It localises to the cytoplasm. Its subcellular location is the secreted. The protein resides in the endosome. It is found in the lysosome. The protein localises to the cell surface. It localises to the endoplasmic reticulum. Its subcellular location is the golgi apparatus. Its activity is regulated as follows. Its proteolytic activity is autoinhibited by the non-covalent binding of the propeptide to the catalytic domain. Inhibited by EGTA. Crucial player in the regulation of plasma cholesterol homeostasis. Binds to low-density lipid receptor family members: low density lipoprotein receptor (LDLR), very low density lipoprotein receptor (VLDLR), apolipoprotein E receptor (LRP1/APOER) and apolipoprotein receptor 2 (LRP8/APOER2), and promotes their degradation in intracellular acidic compartments. Acts via a non-proteolytic mechanism to enhance the degradation of the hepatic LDLR through a clathrin LDLRAP1/ARH-mediated pathway. May prevent the recycling of LDLR from endosomes to the cell surface or direct it to lysosomes for degradation. Can induce ubiquitination of LDLR leading to its subsequent degradation. Inhibits intracellular degradation of APOB via the autophagosome/lysosome pathway in a LDLR-independent manner. Involved in the disposal of non-acetylated intermediates of BACE1 in the early secretory pathway. Inhibits epithelial Na(+) channel (ENaC)-mediated Na(+) absorption by reducing ENaC surface expression primarily by increasing its proteasomal degradation. Regulates neuronal apoptosis via modulation of LRP8/APOER2 levels and related anti-apoptotic signaling pathways. The protein is Proprotein convertase subtilisin/kexin type 9 (PCSK9) of Lagothrix lagotricha (Brown woolly monkey).